The chain runs to 123 residues: Small ribosomal subunit protein uS12 (123 aa).

Aspartate 89 is modified (3-methylthioaspartic acid).

Belongs to the universal ribosomal protein uS12 family. Part of the 30S ribosomal subunit. Contacts proteins S8 and S17. May interact with IF1 in the 30S initiation complex.

In terms of biological role, with S4 and S5 plays an important role in translational accuracy. Functionally, interacts with and stabilizes bases of the 16S rRNA that are involved in tRNA selection in the A site and with the mRNA backbone. Located at the interface of the 30S and 50S subunits, it traverses the body of the 30S subunit contacting proteins on the other side and probably holding the rRNA structure together. The combined cluster of proteins S8, S12 and S17 appears to hold together the shoulder and platform of the 30S subunit. The chain is Small ribosomal subunit protein uS12 from Nitrobacter hamburgensis (strain DSM 10229 / NCIMB 13809 / X14).